The sequence spans 68 residues: Conotoxin Lt5.11 (68 aa).

An N-terminal signal peptide occupies residues 1-19 (MLCLPVFIILLLLASPAAP). A propeptide spanning residues 20 to 54 (KSLETRIQNDLIRAGLTDADLKTEKGFLSGLLNVA) is cleaved from the precursor.

This sequence belongs to the conotoxin T superfamily. Contains 2 disulfide bonds that can be either 'C1-C3, C2-C4' or 'C1-C4, C2-C3', since these disulfide connectivities have been observed for conotoxins with cysteine framework V (for examples, see AC P0DQQ7 and AC P81755). Expressed by the venom duct.

It localises to the secreted. The protein is Conotoxin Lt5.11 of Conus litteratus (Lettered cone).